A 341-amino-acid chain; its full sequence is L-threonine 3-dehydrogenase (341 aa).

Cys38 provides a ligand contact to Zn(2+). Active-site charge relay system residues include Thr40 and His43. His63, Glu64, Cys93, Cys96, Cys99, and Cys107 together coordinate Zn(2+). NAD(+) contacts are provided by residues Ile175, Asp195, Arg200, 262–264, and 286–287; these read LGI and IY.

Belongs to the zinc-containing alcohol dehydrogenase family. Homotetramer. Requires Zn(2+) as cofactor.

It is found in the cytoplasm. It catalyses the reaction L-threonine + NAD(+) = (2S)-2-amino-3-oxobutanoate + NADH + H(+). Its pathway is amino-acid degradation; L-threonine degradation via oxydo-reductase pathway; glycine from L-threonine: step 1/2. Its function is as follows. Catalyzes the NAD(+)-dependent oxidation of L-threonine to 2-amino-3-ketobutyrate. This is L-threonine 3-dehydrogenase from Cronobacter sakazakii (strain ATCC BAA-894) (Enterobacter sakazakii).